A 607-amino-acid polypeptide reads, in one-letter code: Elongation factor 4 (607 aa).

Residues 11 to 193 (ENIRNFSIIA…KIVDVVPAPD (183 aa)) form the tr-type G domain. Residues 23–28 (DHGKST) and 140–143 (NKID) contribute to the GTP site.

This sequence belongs to the TRAFAC class translation factor GTPase superfamily. Classic translation factor GTPase family. LepA subfamily.

The protein localises to the cell membrane. It carries out the reaction GTP + H2O = GDP + phosphate + H(+). Its function is as follows. Required for accurate and efficient protein synthesis under certain stress conditions. May act as a fidelity factor of the translation reaction, by catalyzing a one-codon backward translocation of tRNAs on improperly translocated ribosomes. Back-translocation proceeds from a post-translocation (POST) complex to a pre-translocation (PRE) complex, thus giving elongation factor G a second chance to translocate the tRNAs correctly. Binds to ribosomes in a GTP-dependent manner. This is Elongation factor 4 from Staphylococcus epidermidis (strain ATCC 35984 / DSM 28319 / BCRC 17069 / CCUG 31568 / BM 3577 / RP62A).